Consider the following 234-residue polypeptide: uncharacterized protein (234 aa).

The interval 1 to 23 (MVDQIRSPSWKSGFPSHQHQQGS) is disordered.

This is an uncharacterized protein from Caenorhabditis elegans.